The chain runs to 1097 residues: UPF0746 protein DDB_G0281095 (1097 aa).

Basic and acidic residues predominate over residues 1 to 11 (MVNNNKRKEIE). A disordered region spans residues 1-24 (MVNNNKRKEIENQENDNDDDNDGL). Residues 12–22 (NQENDNDDDND) show a composition bias toward acidic residues. Positions 35 to 69 (YDSIRSKELQTIAKSLGLPNNGKKQEVYKRIEGYF) constitute an SAP domain. Positions 329 to 521 (FKEIREIHQQ…QLILELNEIQ (193 aa)) form a coiled coil.

It belongs to the UPF0746 family.

This is UPF0746 protein DDB_G0281095 from Dictyostelium discoideum (Social amoeba).